The primary structure comprises 299 residues: Tyrosine recombinase XerC (299 aa).

The Core-binding (CB) domain maps to Met-1–Thr-86. Residues Lys-107–Asn-293 enclose the Tyr recombinase domain. Active-site residues include Arg-146, Lys-170, His-245, Arg-248, and His-271. The O-(3'-phospho-DNA)-tyrosine intermediate role is filled by Tyr-280.

This sequence belongs to the 'phage' integrase family. XerC subfamily. As to quaternary structure, forms a cyclic heterotetrameric complex composed of two molecules of XerC and two molecules of XerD.

It is found in the cytoplasm. Site-specific tyrosine recombinase, which acts by catalyzing the cutting and rejoining of the recombining DNA molecules. The XerC-XerD complex is essential to convert dimers of the bacterial chromosome into monomers to permit their segregation at cell division. It also contributes to the segregational stability of plasmids. The protein is Tyrosine recombinase XerC of Natranaerobius thermophilus (strain ATCC BAA-1301 / DSM 18059 / JW/NM-WN-LF).